A 569-amino-acid chain; its full sequence is 3-oxosteroid 1-dehydrogenase (569 aa).

Residue aspartate 10–lysine 39 participates in FAD binding. A disordered region spans residues proline 127–proline 148.

It belongs to the FAD-dependent oxidoreductase 2 family. 3-oxosteroid dehydrogenase subfamily. It depends on FAD as a cofactor.

The enzyme catalyses a 3-oxosteroid + A = a 3-oxo-Delta(1)-steroid + AH2. It catalyses the reaction a 3-oxo-Delta(4)-steroid + A = a 3-oxo-Delta(1,4)-steroid + AH2. Catalyzes the elimination of the C-1 and C-2 hydrogen atoms of the A-ring from the polycyclic ring structure of 3-ketosteroids. Is also involved in the formation of 1,4-androstadiene-3,17-dione (ADD) from 4-androstene-3,17-dione (AD) to. The sequence is that of 3-oxosteroid 1-dehydrogenase (ksdD) from Mycolicibacterium smegmatis (strain ATCC 700084 / mc(2)155) (Mycobacterium smegmatis).